Here is an 87-residue protein sequence, read N- to C-terminus: Sec-independent protein translocase protein TatA (87 aa).

Residues 3–23 (GTFSWTHLLIIALLFVVLFGA) form a helical membrane-spanning segment. Residues 47–87 (MQHETPQANAAPVQQPAQQLPPAQPAQAPAQPVNQAEQKSA) are disordered. The segment covering 52-87 (PQANAAPVQQPAQQLPPAQPAQAPAQPVNQAEQKSA) has biased composition (low complexity).

Belongs to the TatA/E family. In terms of assembly, the Tat system comprises two distinct complexes: a TatABC complex, containing multiple copies of TatA, TatB and TatC subunits, and a separate TatA complex, containing only TatA subunits. Substrates initially bind to the TatABC complex, which probably triggers association of the separate TatA complex to form the active translocon.

Its subcellular location is the cell membrane. Functionally, part of the twin-arginine translocation (Tat) system that transports large folded proteins containing a characteristic twin-arginine motif in their signal peptide across membranes. TatA could form the protein-conducting channel of the Tat system. This is Sec-independent protein translocase protein TatA from Nocardia farcinica (strain IFM 10152).